The sequence spans 35 residues: Cecropin (35 aa).

Isoleucine 35 is modified (isoleucine amide).

This sequence belongs to the cecropin family.

Its subcellular location is the secreted. Functionally, cecropins have lytic and antibacterial activity against several Gram-positive and Gram-negative bacteria. This chain is Cecropin, found in Bombyx mori (Silk moth).